We begin with the raw amino-acid sequence, 142 residues long: Antirestriction protein KlcA (142 aa).

It belongs to the antirestriction protein family.

Functionally, could be involved in overcoming restriction barriers during establishment after conjugative transfer. The chain is Antirestriction protein KlcA (klcA) from Escherichia coli.